Reading from the N-terminus, the 402-residue chain is uncharacterized protein (402 aa).

The next 11 membrane-spanning stretches (helical) occupy residues 12 to 32 (FWLITGIIFIAFNLRPAITSV), 48 to 68 (GAAGFLTALPLLSFAVLSPLA), 80 to 100 (TLWLGLVILLIGVLTRSTGYT), 101 to 121 (AALFFGTALIGVGIAIGNVLL), 134 to 154 (GIMISLYTTSMNIFAALASGV), 168 to 188 (QAFLLWGGLALLALLIWIPQL), 212 to 232 (WYVTIFMGLQSFLFYSSIAWF), 248 to 268 (WMVSLMQFASLPSTFLTPVLA), 291 to 311 (GLLAGGSHTLLAIWMIIIGIG), 339 to 359 (MSQSFGYLLAAVGPIFVGYLF), and 367 to 387 (MPIVLLIAALIVMGAAGQGAG).

Belongs to the major facilitator superfamily. Cyanate porter (TC 2.A.1.17) family.

It localises to the cell membrane. This is an uncharacterized protein from Bacillus subtilis (strain 168).